A 446-amino-acid chain; its full sequence is MKAAKNNVYTVSRLNGEVRQILEGQIGKIWLNGEISNFSSPSSGHWYLTLKDTHSQIRCAMFKGRNQSVNFRPVNGQQVLVKGAISVYEPRGDYQLLLESMLPAGDGLLAQEYEALKMKLAAEGLFASETKRALPSNIQRIGIITSATGAALRDVLHVLQRRDASIEVVVYPTQVQGTSASDNICRAIELANKRLEVDVLLLTRGGGSLEDLWCFNNEMLAHSIYNSALPVVSAVGHEVDTTISDYVADVRAPTPSAGAELLSQDKGNKAQKLALMLSRLAQGMRHYQLSQDKHFVNLQHRLNQQDPKRRLQQLEQQFDEFQLRLDNAFKHRLSRLTLRHERLSAQLQRQSPEHKLRLAHQALTHVSGRFDDAIKDTLGSAEQRLKQAVHQLEAMSPLATLSRGYSISSNANGKVITDASKVKVGDSLHTRLAKGQLVSTVIDVEM.

This sequence belongs to the XseA family. In terms of assembly, heterooligomer composed of large and small subunits.

It localises to the cytoplasm. It carries out the reaction Exonucleolytic cleavage in either 5'- to 3'- or 3'- to 5'-direction to yield nucleoside 5'-phosphates.. In terms of biological role, bidirectionally degrades single-stranded DNA into large acid-insoluble oligonucleotides, which are then degraded further into small acid-soluble oligonucleotides. This is Exodeoxyribonuclease 7 large subunit from Shewanella denitrificans (strain OS217 / ATCC BAA-1090 / DSM 15013).